The primary structure comprises 989 residues: Envelope glycoprotein gp160 (989 aa).

The N-terminal stretch at 1–106 (MTSKESKPSR…CLMWEMRKGN (106 aa)) is a signal peptide. Over 107–838 (QCQAEEVIAL…WSSWFSWLKY (732 aa)) the chain is Extracellular. N-linked (GlcNAc...) asparagine; by host glycosylation is found at Asn-140, Asn-161, Asn-206, Asn-258, Asn-298, Asn-364, Asn-381, Asn-387, Asn-403, Asn-435, Asn-439, Asn-470, Asn-475, Asn-481, Asn-491, Asn-501, Asn-515, Asn-527, Asn-537, Asn-542, Asn-543, Asn-551, and Asn-568. Positions 663–683 (GIGLVIVLAIMAIIAAAGAGL) are fusion peptide. Residues 695–745 (RTAVQSLANATAAQQEVLEASYAMVQHIAKGIRILEARVARVEALVDRMMV) are a coiled coil. Residue Asn-703 is glycosylated (N-linked (GlcNAc...) asparagine; by host). The segment at 729 to 745 (LEARVARVEALVDRMMV) is immunosuppression. 4 N-linked (GlcNAc...) asparagine; by host glycosylation sites follow: Asn-771, Asn-778, Asn-794, and Asn-828. Positions 786–821 (EEIEQHEGNLSLLLREAALQVHIAQRDARRIPDAWK) form a coiled coil. Residues 839–859 (IPWIIMGIVGLICFRILMCVI) traverse the membrane as a helical segment. At 860-989 (SMCLQAYKQV…PTLENDYVEL (130 aa)) the chain is on the cytoplasmic side. Cys-862 carries S-palmitoyl cysteine; by host lipidation.

In terms of assembly, the mature envelope protein (Env) consists of a trimer of SU-TM heterodimers attached by noncovalent interactions or by a labile interchain disulfide bond. Specific enzymatic cleavages in vivo yield mature proteins. Envelope glycoproteins are synthesized as an inactive precursor that is N-glycosylated and processed likely by host cell furin or by a furin-like protease in the Golgi to yield the mature SU and TM proteins. The cleavage site between SU and TM requires the minimal sequence [KR]-X-[KR]-R. In terms of processing, the transmembrane protein is palmitoylated.

The protein localises to the virion membrane. It localises to the host cell membrane. Its function is as follows. The surface protein (SU) attaches the virus to the host cell by binding to its receptor. This interaction triggers the refolding of the transmembrane protein (TM) and is thought to activate its fusogenic potential by unmasking its fusion peptide. Fusion occurs at the host cell plasma membrane. Functionally, the transmembrane protein (TM) acts as a class I viral fusion protein. Under the current model, the protein has at least 3 conformational states: pre-fusion native state, pre-hairpin intermediate state, and post-fusion hairpin state. During viral and target cell membrane fusion, the coiled coil regions (heptad repeats) assume a trimer-of-hairpins structure, positioning the fusion peptide in close proximity to the C-terminal region of the ectodomain. The formation of this structure appears to drive apposition and subsequent fusion of viral and target cell membranes. Membranes fusion leads to delivery of the nucleocapsid into the cytoplasm. The protein is Envelope glycoprotein gp160 (env) of Ovis aries (Sheep).